Reading from the N-terminus, the 336-residue chain is MKLAVIPGDGIGVEVTAEALKVLRKLVPDLQTTEYDLGARRYNATGELLPDADLAAIREHDAILLGAIGDPSVTPGVLERGLLLNMRFALDHHVNLRPSQLYPGSKSPLAAQPDIDFVVVREGTEGPYTGNGGAIRVGTPHEIATEVSINTWFGAERVVRYAFALAQTRRKHVTLIHKTNVLSNAGAIWTRAVETVSAEYPDVETAYCHIDAATIYMVTDPSRFDVIVTDNLFGDIITDLAGAVTGGIGLAASGNIDASGTNPSMFEPVHGSAPDIAGQGIADPTAAILSAALLLRHLGRDGDAARIEAAVEADLASRGDSKVVTSEVGDRIAAAL.

Substrate contacts are provided by R87, R97, R121, and D211. Residues D211, D235, and D239 each coordinate Mg(2+). 271–283 (GSAPDIAGQGIAD) is a binding site for NAD(+).

It belongs to the isocitrate and isopropylmalate dehydrogenases family. LeuB type 2 subfamily. Homodimer. Requires Mg(2+) as cofactor. Mn(2+) is required as a cofactor.

It is found in the cytoplasm. The enzyme catalyses (2R,3S)-3-isopropylmalate + NAD(+) = 4-methyl-2-oxopentanoate + CO2 + NADH. It functions in the pathway amino-acid biosynthesis; L-leucine biosynthesis; L-leucine from 3-methyl-2-oxobutanoate: step 3/4. In terms of biological role, catalyzes the oxidation of 3-carboxy-2-hydroxy-4-methylpentanoate (3-isopropylmalate) to 3-carboxy-4-methyl-2-oxopentanoate. The product decarboxylates to 4-methyl-2 oxopentanoate. The sequence is that of 3-isopropylmalate dehydrogenase from Rhodococcus jostii (strain RHA1).